We begin with the raw amino-acid sequence, 193 residues long: dCTP deaminase (193 aa).

DCTP contacts are provided by residues 110-115 (RSSLAR), D128, 136-138 (VLE), Y171, K178, and Q182. E138 serves as the catalytic Proton donor/acceptor. A disordered region spans residues 174–193 (RKNAKYKDQQEAVASRISQD).

It belongs to the dCTP deaminase family. Homotrimer.

The catalysed reaction is dCTP + H2O + H(+) = dUTP + NH4(+). Its pathway is pyrimidine metabolism; dUMP biosynthesis; dUMP from dCTP (dUTP route): step 1/2. Catalyzes the deamination of dCTP to dUTP. The polypeptide is dCTP deaminase (Shewanella sp. (strain W3-18-1)).